A 742-amino-acid polypeptide reads, in one-letter code: Phosphoribosylformylglycinamidine synthase subunit PurL (742 aa).

Histidine 53 is a catalytic residue. Positions 56 and 95 each coordinate ATP. Residue glutamate 97 participates in Mg(2+) binding. Substrate is bound by residues 98-101 (SHNH) and arginine 120. The active-site Proton acceptor is histidine 99. Mg(2+) is bound at residue aspartate 121. Glutamine 244 is a binding site for substrate. Residue aspartate 274 coordinates Mg(2+). Residue 318–320 (ESQ) coordinates substrate. ATP-binding residues include aspartate 501 and glycine 538. Mg(2+) is bound at residue asparagine 539. Residue serine 541 participates in substrate binding.

The protein belongs to the FGAMS family. As to quaternary structure, monomer. Part of the FGAM synthase complex composed of 1 PurL, 1 PurQ and 2 PurS subunits.

It localises to the cytoplasm. The enzyme catalyses N(2)-formyl-N(1)-(5-phospho-beta-D-ribosyl)glycinamide + L-glutamine + ATP + H2O = 2-formamido-N(1)-(5-O-phospho-beta-D-ribosyl)acetamidine + L-glutamate + ADP + phosphate + H(+). Its pathway is purine metabolism; IMP biosynthesis via de novo pathway; 5-amino-1-(5-phospho-D-ribosyl)imidazole from N(2)-formyl-N(1)-(5-phospho-D-ribosyl)glycinamide: step 1/2. Functionally, part of the phosphoribosylformylglycinamidine synthase complex involved in the purines biosynthetic pathway. Catalyzes the ATP-dependent conversion of formylglycinamide ribonucleotide (FGAR) and glutamine to yield formylglycinamidine ribonucleotide (FGAM) and glutamate. The FGAM synthase complex is composed of three subunits. PurQ produces an ammonia molecule by converting glutamine to glutamate. PurL transfers the ammonia molecule to FGAR to form FGAM in an ATP-dependent manner. PurS interacts with PurQ and PurL and is thought to assist in the transfer of the ammonia molecule from PurQ to PurL. This is Phosphoribosylformylglycinamidine synthase subunit PurL from Limosilactobacillus reuteri (strain DSM 20016) (Lactobacillus reuteri).